Consider the following 444-residue polypeptide: uncharacterized protein (444 aa).

Residues 1–72 (MGFLTAAIRV…RPMWNVSFLR (72 aa)) constitute a chloroplast transit peptide. The segment at 77–107 (HSTPARETGDDDISKSENSSSQDGDSCTKLK) is disordered. Positions 92-101 (SENSSSQDGD) are enriched in polar residues. The CRM domain maps to 175-272 (EILTPEEHFY…KNYVQPPTEI (98 aa)). Positions 292–355 (DALRAVRKYI…CLEDEQEEDE (64 aa)) form a coiled coil. Disordered stretches follow at residues 344-364 (EECLEDEQEEDEAGLELATDS) and 392-426 (KFPAINNREDEDFGDLGKAKSEGEENDDDKSPNFD). Residues 346 to 357 (CLEDEQEEDEAG) are compositionally biased toward acidic residues. A compositionally biased stretch (basic and acidic residues) spans 406 to 426 (DLGKAKSEGEENDDDKSPNFD).

The protein resides in the plastid. The protein localises to the chloroplast. This is an uncharacterized protein from Arabidopsis thaliana (Mouse-ear cress).